The primary structure comprises 410 residues: Neuroserpin (410 aa).

The signal sequence occupies residues 1–16 (MAFLGLFSLLVLQSMA). 3 N-linked (GlcNAc...) asparagine glycosylation sites follow: N157, N321, and N401. Residue S403 is glycosylated (O-linked (Xyl...) (chondroitin sulfate) serine).

It belongs to the serpin family. In terms of assembly, monomer. Has a tendency to form large polymers already at 41 and 45 degrees Celsius (in vitro). In terms of tissue distribution, detected in brain cortex and hippocampus pyramidal neurons (at protein level). Detected in cerebrospinal fluid (at protein level). Predominantly expressed in the brain.

It localises to the secreted. It is found in the cytoplasmic vesicle. The protein resides in the secretory vesicle lumen. Its subcellular location is the perikaryon. Serine protease inhibitor that inhibits plasminogen activators and plasmin but not thrombin. May be involved in the formation or reorganization of synaptic connections as well as for synaptic plasticity in the adult nervous system. May protect neurons from cell damage by tissue-type plasminogen activator. The protein is Neuroserpin (SERPINI1) of Homo sapiens (Human).